Here is a 688-residue protein sequence, read N- to C-terminus: GTPase IMAP family member 8 (688 aa).

A disordered region spans residues 22–44; the sequence is TSIGQGERPRASRGQESNFKQSQ. The segment covering 35-44 has biased composition (polar residues); that stretch reads GQESNFKQSQ. 3 consecutive AIG1-type G domains span residues 46–246, 281–471, and 472–681; these read TSTL…TENS, TPEL…VIRE, and KELL…SAVG. A G1 region spans residues 55–62; that stretch reads GKQGAGKS. Residues 55 to 63 and S76 contribute to the GTP site; that span reads GKQGAGKSA. The interval 82-86 is G2; that stretch reads MVTKR. Residues 103 to 106 are G3; that stretch reads DTPD. The interval 171-174 is G4; that stretch reads TRED. GTP is bound by residues 172–174 and N208; that span reads RED. Residues 207-209 are G5; it reads NNK.

This sequence belongs to the TRAFAC class TrmE-Era-EngA-EngB-Septin-like GTPase superfamily. AIG1/Toc34/Toc159-like paraseptin GTPase family. IAN subfamily. As to expression, spleen, thymus and T-cells. Greatly reduced in T-cells from lymphopenic rats.

It is found in the endoplasmic reticulum. Its subcellular location is the golgi apparatus. The protein localises to the mitochondrion. The protein resides in the cytoplasm. It localises to the cytosol. Functionally, exerts an anti-apoptotic effect in the immune system and is involved in responses to infections. This chain is GTPase IMAP family member 8 (Gimap8), found in Rattus norvegicus (Rat).